Here is a 158-residue protein sequence, read N- to C-terminus: MMRFMLLFSRQGKLRLQKWYLATSDKERKKMVRELMQVVLARKPKMCSFLEWRDLKVVYKRYASLYFCCAIEGQDNELITLELIHRYVELLDKYFGSVCELDIIFNFEKAYFILDEFLMGGDVQDTSKKSVLKAIEQADLLQEEDESPRSVLEEMGLA.

Ser-147 carries the post-translational modification Phosphoserine.

The protein belongs to the adaptor complexes small subunit family. Adaptor protein complex 1 (AP-1) is a heterotetramer composed of two large adaptins (gamma-type subunit AP1G1 and beta-type subunit AP1B1), a medium adaptin (mu-type subunit AP1M1 or AP1M2) and a small adaptin (sigma-type subunit AP1S1 or AP1S2 or AP1S3). Widely expressed.

It is found in the golgi apparatus. Its subcellular location is the cytoplasmic vesicle membrane. It localises to the membrane. The protein localises to the clathrin-coated pit. Functionally, subunit of clathrin-associated adaptor protein complex 1 that plays a role in protein sorting in the late-Golgi/trans-Golgi network (TGN) and/or endosomes. The AP complexes mediate both the recruitment of clathrin to membranes and the recognition of sorting signals within the cytosolic tails of transmembrane cargo molecules. The polypeptide is AP-1 complex subunit sigma-1A (AP1S1) (Homo sapiens (Human)).